A 93-amino-acid chain; its full sequence is YcgL domain-containing protein Shew_2183 (93 aa).

The YcgL domain maps to 1-85; that stretch reads MICAVYKSRL…PPVNLLEEYK (85 aa).

This is YcgL domain-containing protein Shew_2183 from Shewanella loihica (strain ATCC BAA-1088 / PV-4).